Here is a 150-residue protein sequence, read N- to C-terminus: 16 kDa phloem protein 1 (150 aa).

The C2 domain maps to 1–108 (MGMGMMEVHL…LAEGVRKGKS (108 aa)). Ca(2+)-binding residues include aspartate 20, aspartate 27, aspartate 78, aspartate 80, and aspartate 86.

It depends on Ca(2+) as a cofactor. As to expression, sieve elements of leaves, stems, roots and flowers.

Its function is as follows. Binds to both sense and antisense RNA. Interacts with mesophyll plasmodesmata to mediate its own cell-to-cell transport and potentiate RNA trafficking. This chain is 16 kDa phloem protein 1 (PP16-1), found in Cucurbita maxima (Pumpkin).